Consider the following 141-residue polypeptide: Putative antiporter subunit mnhB2 (141 aa).

4 helical membrane passes run 10 to 30, 35 to 55, 70 to 90, and 116 to 136; these read TVTK…FFAG, GGGF…FLAF, KLMI…VFFG, and LFEL…MLAL.

Belongs to the CPA3 antiporters (TC 2.A.63) subunit B family. In terms of assembly, may form a heterooligomeric complex that consists of seven subunits: mnhA2, mnhB2, mnhC2, mnhD2, mnhE2, mnhF2 and mnhG2.

It is found in the cell membrane. The polypeptide is Putative antiporter subunit mnhB2 (mnhB2) (Staphylococcus haemolyticus (strain JCSC1435)).